Consider the following 227-residue polypeptide: MNRLLSLFQLCDSNFPSGSFSHSFGLETYIQEKVITDKESFKNAISVYIRKQLFFTEGLACILAYEAMEKNEPSALVELDHILFASNVAQETRSGNQRMGERMAKLCVDLYPSPILIEYTNRIKEKKAYGHSAIVFAIVAYHLKVTKETAVGAYLFANVSALVQNAVRGIPIGQTDGQRILVEIQPLLEEGVRTISQLPKEDLGAVSPGMEIAQMRHERLNVRLFMS.

This sequence belongs to the UreF family. As to quaternary structure, ureD, UreF and UreG form a complex that acts as a GTP-hydrolysis-dependent molecular chaperone, activating the urease apoprotein by helping to assemble the nickel containing metallocenter of UreC. The UreE protein probably delivers the nickel.

The protein resides in the cytoplasm. In terms of biological role, required for maturation of urease via the functional incorporation of the urease nickel metallocenter. This is Urease accessory protein UreF from Bacillus sp. (strain TB-90).